A 1070-amino-acid chain; its full sequence is DNA-directed RNA polymerase subunit beta (1070 aa).

It belongs to the RNA polymerase beta chain family. As to quaternary structure, in plastids the minimal PEP RNA polymerase catalytic core is composed of four subunits: alpha, beta, beta', and beta''. When a (nuclear-encoded) sigma factor is associated with the core the holoenzyme is formed, which can initiate transcription.

The protein resides in the plastid. It localises to the chloroplast. The enzyme catalyses RNA(n) + a ribonucleoside 5'-triphosphate = RNA(n+1) + diphosphate. In terms of biological role, DNA-dependent RNA polymerase catalyzes the transcription of DNA into RNA using the four ribonucleoside triphosphates as substrates. This chain is DNA-directed RNA polymerase subunit beta, found in Solanum bulbocastanum (Wild potato).